The following is a 268-amino-acid chain: Protein CDV3 homolog (268 aa).

The span at 40–50 (KREVVKPKKPE) shows a compositional bias: basic and acidic residues. Disordered stretches follow at residues 40 to 145 (KREV…ERVG) and 184 to 268 (QQAG…DEAS). Residues 51–61 (AAAGGVAVVGE) show a composition bias toward low complexity. Over residues 76–85 (VEEEWKEFEE) the composition is skewed to acidic residues. Positions 98–107 (QLSTITAQES) are enriched in polar residues. A compositionally biased stretch (acidic residues) spans 123–132 (NYDEDDEDSN). Basic and acidic residues predominate over residues 221–239 (RPEEQRKKKNEPAFEEVRH).

This sequence belongs to the CDV3 family.

This chain is Protein CDV3 homolog, found in Drosophila yakuba (Fruit fly).